A 334-amino-acid chain; its full sequence is Glycerol-1-phosphate dehydrogenase [NAD(P)+] (334 aa).

NAD(+) is bound by residues 77–81 and 99–102; these read GRPID and TTAS. Asp104 contributes to the substrate binding site. NAD(+) is bound at residue Ser108. Asp147 lines the substrate pocket. Zn(2+) contacts are provided by Asp147 and His225. His229 serves as a coordination point for substrate. His246 contacts Zn(2+).

Belongs to the glycerol-1-phosphate dehydrogenase family. Zn(2+) is required as a cofactor.

It localises to the cytoplasm. The enzyme catalyses sn-glycerol 1-phosphate + NAD(+) = dihydroxyacetone phosphate + NADH + H(+). The catalysed reaction is sn-glycerol 1-phosphate + NADP(+) = dihydroxyacetone phosphate + NADPH + H(+). The protein operates within membrane lipid metabolism; glycerophospholipid metabolism. Functionally, catalyzes the NAD(P)H-dependent reduction of dihydroxyacetonephosphate (DHAP or glycerone phosphate) to glycerol 1-phosphate (G1P). The G1P thus generated is used as the glycerophosphate backbone of phospholipids in the cellular membranes of Archaea. The protein is Glycerol-1-phosphate dehydrogenase [NAD(P)+] of Methanococcus maripaludis (strain C6 / ATCC BAA-1332).